We begin with the raw amino-acid sequence, 337 residues long: Ornithine carbamoyltransferase (337 aa).

Carbamoyl phosphate contacts are provided by residues 57–60 (STRT), Q84, R108, and 135–138 (HPTQ). L-ornithine contacts are provided by residues N167, D231, and 235–236 (SM). Residues 272 to 273 (CL) and R317 contribute to the carbamoyl phosphate site.

Belongs to the aspartate/ornithine carbamoyltransferase superfamily. OTCase family.

It is found in the cytoplasm. The catalysed reaction is carbamoyl phosphate + L-ornithine = L-citrulline + phosphate + H(+). It participates in amino-acid degradation; L-arginine degradation via ADI pathway; carbamoyl phosphate from L-arginine: step 2/2. Its function is as follows. Reversibly catalyzes the transfer of the carbamoyl group from carbamoyl phosphate (CP) to the N(epsilon) atom of ornithine (ORN) to produce L-citrulline. The sequence is that of Ornithine carbamoyltransferase from Streptococcus uberis (strain ATCC BAA-854 / 0140J).